We begin with the raw amino-acid sequence, 382 residues long: Lipid-A-disaccharide synthase (382 aa).

The protein belongs to the LpxB family.

The enzyme catalyses 2-N,3-O-bis[(3R)-3-hydroxytetradecanoyl]-alpha-D-glucosaminyl 1-phosphate + UDP-2-N,3-O-bis[(3R)-3-hydroxytetradecanoyl]-alpha-D-glucosamine = lipid A disaccharide (E. coli) + UDP + H(+). The catalysed reaction is a lipid X + a UDP-2-N,3-O-bis[(3R)-3-hydroxyacyl]-alpha-D-glucosamine = a lipid A disaccharide + UDP + H(+). It functions in the pathway glycolipid biosynthesis; lipid IV(A) biosynthesis; lipid IV(A) from (3R)-3-hydroxytetradecanoyl-[acyl-carrier-protein] and UDP-N-acetyl-alpha-D-glucosamine: step 5/6. Condensation of UDP-2,3-diacylglucosamine and 2,3-diacylglucosamine-1-phosphate to form lipid A disaccharide, a precursor of lipid A, a phosphorylated glycolipid that anchors the lipopolysaccharide to the outer membrane of the cell. The polypeptide is Lipid-A-disaccharide synthase (Shigella boydii serotype 18 (strain CDC 3083-94 / BS512)).